We begin with the raw amino-acid sequence, 573 residues long: Developmental and secondary metabolism regulator VEL1 (573 aa).

The region spanning 26-220 (NRHLWYQLTV…ADQGCRVRIR (195 aa)) is the Velvet domain. The Nuclear localization signal signature appears at 40-45 (ERARAC). Residues 222–520 (DVRMRKRDGK…STGGKRKHDH (299 aa)) are disordered. Residues 230 to 245 (GKGSGFDRRGEEEYSR) show a composition bias toward basic and acidic residues. Composition is skewed to pro residues over residues 291 to 310 (APPP…PPAA) and 341 to 351 (APIPPATPTGP). The span at 352-363 (YPTSSAAPSPYA) shows a compositional bias: low complexity. Over residues 379–389 (PPAPSASPAPP) the composition is skewed to pro residues. The segment covering 432–448 (TPASQPTYSTPASQPTY) has biased composition (polar residues). A compositionally biased stretch (pro residues) spans 458–475 (SAPPPAPYSAPAPPPPRP). The segment at 476 to 504 (SMSQSSLAPLKIASLVSPLPPIEAQTEPL) is PEST.

The protein belongs to the velvet family. VeA subfamily. In terms of assembly, component of the heterotrimeric velvet complex composed of LAE1, VEL1 and VEL2; VEL1 acting as a bridging protein between LAE1 and VEL2. Interacts with LAE1.

It is found in the nucleus. The protein resides in the cytoplasm. Its function is as follows. Component of the velvet transcription factor complex that controls sexual/asexual developmental ratio in response to light, promoting sexual development in the darkness while stimulating asexual sporulation under illumination. The velvet complex hat acts as a global regulator for secondary metabolite gene expression. Regulates expression of the carbohydrate-active enzyme gene clusters. This Hypocrea jecorina (strain QM6a) (Trichoderma reesei) protein is Developmental and secondary metabolism regulator VEL1.